The chain runs to 278 residues: HTH-type transcriptional activator RhaS (278 aa).

The region spanning 174–272 (NQLMAWLEDH…NWSPRDIRQG (99 aa)) is the HTH araC/xylS-type domain. 2 consecutive DNA-binding regions (H-T-H motif) follow at residues 191 to 212 (EAVA…KQHT) and 239 to 262 (VTEI…RREF).

As to quaternary structure, binds DNA as a dimer.

It localises to the cytoplasm. Functionally, activates expression of the rhaBAD and rhaT operons. The chain is HTH-type transcriptional activator RhaS from Salmonella agona (strain SL483).